A 157-amino-acid polypeptide reads, in one-letter code: Succinate dehydrogenase assembly factor 2-B, mitochondrial (157 aa).

A mitochondrion-targeting transit peptide spans 1–22 (MLSQWFRGRHLVVRSALFSRRR).

The protein belongs to the SDHAF2 family. As to quaternary structure, interacts with the flavoprotein subunit within the SDH catalytic dimer.

The protein localises to the mitochondrion matrix. Functionally, plays an essential role in the assembly of succinate dehydrogenase (SDH), an enzyme complex (also referred to as respiratory complex II) that is a component of both the tricarboxylic acid (TCA) cycle and the mitochondrial electron transport chain, and which couples the oxidation of succinate to fumarate with the reduction of ubiquinone (coenzyme Q) to ubiquinol. Required for flavinylation (covalent attachment of FAD) of the flavoprotein subunit of the SDH catalytic dimer. In Drosophila mojavensis (Fruit fly), this protein is Succinate dehydrogenase assembly factor 2-B, mitochondrial.